The sequence spans 757 residues: Double zinc ribbon and ankyrin repeat-containing protein 1 (757 aa).

2 consecutive DZANK-type zinc fingers follow at residues Cys-230–Glu-290 and Cys-359–Gly-407. 2 ANK repeats span residues Glu-631–Cys-662 and Gln-666–Gln-695.

Interacts with NINL. Associates with DYNC1H1 and multiple dynein intermediate and light chains as well as actin-binding proteins. In terms of tissue distribution, expressed in retina.

The protein localises to the cell projection. The protein resides in the cilium. Functionally, involved in vesicle transport in photoreceptor cells. The sequence is that of Double zinc ribbon and ankyrin repeat-containing protein 1 from Rattus norvegicus (Rat).